We begin with the raw amino-acid sequence, 291 residues long: ATP synthase subunit a (291 aa).

6 helical membrane-spanning segments follow: residues 51-71 (FSFTNPSLFMLLTLSLVLLLV), 117-137 (FFPCIFVTFTFLLFCNLQGMI), 146-166 (HFLITLGLSFSIFIGITIVGF), 173-193 (FLSFLLPAGVPLPLAPFLVLL), 213-233 (MMAGHSLVKILSGFAWTMLCM), and 239-259 (FIGDLGPLFIVLALTGPELGV).

Belongs to the ATPase A chain family. As to quaternary structure, F-type ATPases have 2 components, CF(1) - the catalytic core - and CF(0) - the membrane proton channel. CF(1) has five subunits: alpha(3), beta(3), gamma(1), delta(1), epsilon(1). CF(0) has three main subunits: a, b and c.

The protein resides in the mitochondrion inner membrane. Functionally, mitochondrial membrane ATP synthase (F(1)F(0) ATP synthase or Complex V) produces ATP from ADP in the presence of a proton gradient across the membrane which is generated by electron transport complexes of the respiratory chain. F-type ATPases consist of two structural domains, F(1) - containing the extramembraneous catalytic core and F(0) - containing the membrane proton channel, linked together by a central stalk and a peripheral stalk. During catalysis, ATP synthesis in the catalytic domain of F(1) is coupled via a rotary mechanism of the central stalk subunits to proton translocation. Key component of the proton channel; it may play a direct role in the translocation of protons across the membrane. The polypeptide is ATP synthase subunit a (ATP6) (Vicia faba (Broad bean)).